Reading from the N-terminus, the 427-residue chain is Imidazolonepropionase (427 aa).

The Fe(3+) site is built by H96 and H98. Zn(2+) is bound by residues H96 and H98. 4-imidazolone-5-propanoate is bound by residues R105, Y168, and H201. An N-formimidoyl-L-glutamate-binding site is contributed by Y168. Residue H265 coordinates Fe(3+). Zn(2+) is bound at residue H265. Q268 contacts 4-imidazolone-5-propanoate. D340 serves as a coordination point for Fe(3+). D340 lines the Zn(2+) pocket. Residues N342 and G344 each contribute to the N-formimidoyl-L-glutamate site. T345 provides a ligand contact to 4-imidazolone-5-propanoate.

The protein belongs to the metallo-dependent hydrolases superfamily. HutI family. The cofactor is Zn(2+). It depends on Fe(3+) as a cofactor.

It is found in the cytoplasm. The enzyme catalyses 4-imidazolone-5-propanoate + H2O = N-formimidoyl-L-glutamate. It participates in amino-acid degradation; L-histidine degradation into L-glutamate; N-formimidoyl-L-glutamate from L-histidine: step 3/3. Its function is as follows. Catalyzes the hydrolytic cleavage of the carbon-nitrogen bond in imidazolone-5-propanoate to yield N-formimidoyl-L-glutamate. It is the third step in the universal histidine degradation pathway. This Psychrobacter cryohalolentis (strain ATCC BAA-1226 / DSM 17306 / VKM B-2378 / K5) protein is Imidazolonepropionase.